Reading from the N-terminus, the 198-residue chain is UPF0215 protein NEQ431 (198 aa).

Residues threonine 179–glycine 198 are disordered.

Belongs to the UPF0215 family.

The sequence is that of UPF0215 protein NEQ431 from Nanoarchaeum equitans (strain Kin4-M).